A 1836-amino-acid polypeptide reads, in one-letter code: Sodium channel protein type 4 subunit alpha (1836 aa).

Topologically, residues 1–131 (MARPSLCTLV…RGAIKVLIHA (131 aa)) are cytoplasmic. A compositionally biased stretch (basic and acidic residues) spans 39-60 (LQRNKQMEIEEPERKPRSDLEA). The disordered stretch occupies residues 39 to 63 (LQRNKQMEIEEPERKPRSDLEAGKN). An I repeat occupies 113 to 454 (LLSPFSVVRR…VVAMAYAEQN (342 aa)). A helical membrane pass occupies residues 132 to 150 (LFSMFIMITILTNCVFMTM). The Extracellular segment spans residues 151-157 (SDPPPWS). A helical membrane pass occupies residues 158-178 (KNVEYTFTGIYTFESLIKILA). Residues 179 to 192 (RGFCVDDFTFLRDP) lie on the Cytoplasmic side of the membrane. Residues 193–210 (WNWLDFSVIMMAYLTEFV) form a helical membrane-spanning segment. The Extracellular portion of the chain corresponds to 211 to 216 (DLGNIS). N-linked (GlcNAc...) asparagine glycosylation is present at asparagine 214. Residues 217–233 (ALRTFRVLRALKTITVI) form a helical membrane-spanning segment. Over 234-252 (PGLKTIVGALIQSVKKLSD) the chain is Cytoplasmic. A helical membrane pass occupies residues 253–272 (VMILTVFCLSVFALVGLQLF). The Extracellular portion of the chain corresponds to 273-391 (MGNLRQKCVR…PNYGYTSYDT (119 aa)). A disulfide bridge links cysteine 280 with cysteine 360. Residues asparagine 288, asparagine 291, asparagine 297, asparagine 303, asparagine 315, asparagine 321, asparagine 333, and asparagine 362 are each glycosylated (N-linked (GlcNAc...) asparagine). Cysteine 369 and cysteine 375 form a disulfide bridge. Positions 392 to 416 (FSWAFLALFRLMTQDYWENLFQLTL) form an intramembrane region, pore-forming. At 417 to 423 (RAAGKTY) the chain is on the extracellular side. A helical transmembrane segment spans residues 424 to 444 (MIFFVVIIFLGSFYLINLILA). Residues 445–578 (VVAMAYAEQN…NIIHLIVMDP (134 aa)) lie on the Cytoplasmic side of the membrane. Residues 493–530 (GGEADGDPAHGKDCNGSLDTSQGEKGAPRQSSSGDSGI) form a disordered region. Residues 509–528 (SLDTSQGEKGAPRQSSSGDS) are compositionally biased toward polar residues. Residues 560 to 832 (CCAPWLKFKN…QIAIGRIKLG (273 aa)) form an II repeat. Residues 579–597 (FVDLGITICIVLNTLFMAM) traverse the membrane as a helical segment. Residues 598–608 (EHYPMTEHFDN) are Extracellular-facing. The helical transmembrane segment at 609-628 (VLTVGNLVFTGIFTAEMVLK) threads the bilayer. The Cytoplasmic segment spans residues 629–642 (LIAMDPYEYFQQGW). A helical membrane pass occupies residues 643–662 (NIFDSIIVTLSLVELGLANV). Residues 663–664 (QG) are Extracellular-facing. Residues 665-682 (LSVLRSFRLLRVFKLAKS) form a helical membrane-spanning segment. Residues 683-698 (WPTLNMLIKIIGNSVG) are Cytoplasmic-facing. The helical transmembrane segment at 699-717 (ALGNLTLVLAIIVFIFAVV) threads the bilayer. At 718–746 (GMQLFGKSYKECVCKIALDCNLPRWHMHD) the chain is on the extracellular side. The cysteines at positions 731 and 737 are disulfide-linked. An intramembrane region (pore-forming) is located at residues 747–767 (FFHSFLIVFRILCGEWIETMW). The Extracellular segment spans residues 768 to 778 (DCMEVAGQAMC). Cysteine 769 and cysteine 778 are joined by a disulfide. A helical transmembrane segment spans residues 779–797 (LTVFLMVMVIGNLVVLNLF). Residues 798 to 1032 (LALLLSSFSA…ACFKIVEHNW (235 aa)) are Cytoplasmic-facing. 2 disordered regions span residues 863–885 (GAGE…PPEE) and 930–992 (ESDL…QPEE). The span at 876–885 (EDEKKEPPEE) shows a compositional bias: basic and acidic residues. Composition is skewed to acidic residues over residues 930–947 (ESDL…FSEP) and 975–992 (EDPE…QPEE). The stretch at 1013 to 1326 (RGKKWWTLRR…KKYYNAMKKL (314 aa)) is one III repeat. A helical membrane pass occupies residues 1033–1050 (FETFIVFMILLSSGALAF). At 1051–1063 (EDIYIEQRRVIRT) the chain is on the extracellular side. The helical transmembrane segment at 1064–1082 (ILEYADKVFTYIFIMEMLL) threads the bilayer. The Cytoplasmic portion of the chain corresponds to 1083–1096 (KWVAYGFKVYFTNA). The helical transmembrane segment at 1097-1115 (WCWLDFLIVDVSIISLVAN) threads the bilayer. Topologically, residues 1116–1123 (WLGYSELG) are extracellular. A helical membrane pass occupies residues 1124-1142 (PIKSLRTLRALRPLRALSR). Residues 1143–1159 (FEGMRVVVNALLGAIPS) are Cytoplasmic-facing. A helical membrane pass occupies residues 1160–1179 (IMNVLLVCLIFWLIFSIMGV). Residues 1180-1230 (NLFAGKFYYCINTTTSERFDISEVNNKSECESLMHTGQVRWLNVKVNYDNV) lie on the Extracellular side of the membrane. Cysteines 1189 and 1209 form a disulfide. 2 N-linked (GlcNAc...) asparagine glycosylation sites follow: asparagine 1191 and asparagine 1205. An intramembrane region (pore-forming) is located at residues 1231–1252 (GLGYLSLLQVATFKGWMDIMYA). Topologically, residues 1253–1269 (AVDSREKEEQPQYEVNL) are extracellular. Residues 1270-1291 (YMYLYFVIFIIFGSFFTLNLFI) form a helical membrane-spanning segment. The Cytoplasmic segment spans residues 1292–1354 (GVIIDNFNQQ…MVYDLVTKQA (63 aa)). The important for rapid channel inactivation stretch occupies residues 1310 to 1312 (IFM). An IV repeat occupies 1335-1633 (IPRPQNKIQG…WEKFDPDATQ (299 aa)). The helical transmembrane segment at 1355–1372 (FDITIMILICLNMVTMMV) threads the bilayer. Topologically, residues 1373 to 1383 (ETDNQSQLKVD) are extracellular. The chain crosses the membrane as a helical span at residues 1384-1402 (ILYNINMIFIIIFTGECVL). The Cytoplasmic portion of the chain corresponds to 1403 to 1414 (KMLALRQYYFTV). A helical transmembrane segment spans residues 1415–1432 (GWNIFDFVVVILSIVGLA). Over 1433–1445 (LSDLIQKYFVSPT) the chain is Extracellular. A helical transmembrane segment spans residues 1446–1462 (LFRVIRLARIGRVLRLI). The Cytoplasmic portion of the chain corresponds to 1463-1481 (RGAKGIRTLLFALMMSLPA). Residues 1482 to 1499 (LFNIGLLLFLVMFIYSIF) traverse the membrane as a helical segment. Topologically, residues 1500–1521 (GMSNFAYVKKESGIDDMFNFET) are extracellular. Positions 1522–1544 (FGNSIICLFEITTSAGWDGLLNP) form an intramembrane region, pore-forming. Residues 1545 to 1574 (ILNSGPPDCDPNLENPGTSVKGDCGNPSIG) lie on the Extracellular side of the membrane. The cysteines at positions 1553 and 1568 are disulfide-linked. The helical transmembrane segment at 1575 to 1597 (ICFFCSYIIISFLIVVNMYIAII) threads the bilayer. Topologically, residues 1598 to 1836 (LENFNVATEE…VRPGVKESLV (239 aa)) are cytoplasmic. The IQ domain maps to 1727 to 1756 (EEVCAIKIQRAYRRHLLQRSMKQASYMYRH). A disordered region spans residues 1778–1836 (KMYGHENGNSSSPSPEEKGEAGDAGPTMGLMPISPSDTAWPPAPPPGQTVRPGVKESLV).

The protein belongs to the sodium channel (TC 1.A.1.10) family. Nav1.4/SCN4A subfamily. As to quaternary structure, the Nav1.4 voltage-gated sodium channel consists of an ion-conducting alpha subunit SCN4A which is functional on its own and a regulatory beta subunit SCN1B. SCN1B strongly enhances the presence of SCN4A at the cell surface. SCN1B is also required for rapid channel inactivation and recovery after inactivation. It prevents the decrease of channel activity in response to repetitive, high-frequency depolarizations. Interacts with the syntrophins SNTA1, SNTB1 and SNTB2 (via PDZ domain); probably links SCN4A to the actin cytoskeleton and the extracellular matrix via the dystrophin-associated protein complex and regulates its localization in muscle cells. Interacts with TMEM233; probable regulator of the channel.

The protein localises to the cell membrane. It carries out the reaction Na(+)(in) = Na(+)(out). Its activity is regulated as follows. The channel is inhibited by tetrodotoxin and saxitoxin. Inhibited by the conotoxin GVIIJ. Its function is as follows. Pore-forming subunit of Nav1.4, a voltage-gated sodium (Nav) channel that directly mediates the depolarizing phase of action potentials in excitable membranes. Navs, also called VGSCs (voltage-gated sodium channels) or VDSCs (voltage-dependent sodium channels), operate by switching between closed and open conformations depending on the voltage difference across the membrane. In the open conformation they allow Na(+) ions to selectively pass through the pore, along their electrochemical gradient. The influx of Na+ ions provokes membrane depolarization, initiating the propagation of electrical signals throughout cells and tissues. Highly expressed in skeletal muscles, Nav1.4 generates the action potential crucial for muscle contraction. The sequence is that of Sodium channel protein type 4 subunit alpha from Homo sapiens (Human).